The sequence spans 324 residues: Phospho-N-acetylmuramoyl-pentapeptide-transferase (324 aa).

A run of 10 helical transmembrane segments spans residues 5-25, 52-72, 77-97, 117-137, 147-167, 176-196, 203-223, 227-247, 250-270, and 302-322; these read VILF…PIFI, PTMG…VMTM, VSMN…LGFL, LIGQ…QGMP, LSFD…VGGS, LDGL…ILAW, VAIF…FNAH, VFMG…IAIL, LEIL…SVIL, and VVVT…YIEV.

The protein belongs to the glycosyltransferase 4 family. MraY subfamily. Requires Mg(2+) as cofactor.

It localises to the cell membrane. The enzyme catalyses UDP-N-acetyl-alpha-D-muramoyl-L-alanyl-gamma-D-glutamyl-meso-2,6-diaminopimeloyl-D-alanyl-D-alanine + di-trans,octa-cis-undecaprenyl phosphate = di-trans,octa-cis-undecaprenyl diphospho-N-acetyl-alpha-D-muramoyl-L-alanyl-D-glutamyl-meso-2,6-diaminopimeloyl-D-alanyl-D-alanine + UMP. Its pathway is cell wall biogenesis; peptidoglycan biosynthesis. Its function is as follows. Catalyzes the initial step of the lipid cycle reactions in the biosynthesis of the cell wall peptidoglycan: transfers peptidoglycan precursor phospho-MurNAc-pentapeptide from UDP-MurNAc-pentapeptide onto the lipid carrier undecaprenyl phosphate, yielding undecaprenyl-pyrophosphoryl-MurNAc-pentapeptide, known as lipid I. This Bacillus licheniformis (strain ATCC 14580 / DSM 13 / JCM 2505 / CCUG 7422 / NBRC 12200 / NCIMB 9375 / NCTC 10341 / NRRL NRS-1264 / Gibson 46) protein is Phospho-N-acetylmuramoyl-pentapeptide-transferase.